An 84-amino-acid polypeptide reads, in one-letter code: Cell division topological specificity factor (84 aa).

It belongs to the MinE family.

Functionally, prevents the cell division inhibition by proteins MinC and MinD at internal division sites while permitting inhibition at polar sites. This ensures cell division at the proper site by restricting the formation of a division septum at the midpoint of the long axis of the cell. This chain is Cell division topological specificity factor, found in Pseudomonas syringae pv. syringae (strain B728a).